The following is a 481-amino-acid chain: Acetyltransferase peniE (481 aa).

Residues His164 and Asp411 each act as proton acceptor in the active site.

It belongs to the plant acyltransferase family. In terms of assembly, monomer.

Its function is as follows. Acetyltransferase; part of the gene cluster that mediates the biosynthesis of penifulvin A, a potent insecticidal sesquiterpene that features a [5.5.5.6]dioxafenestrane ring. The first step of the pathway is performed by the sesquiterpene cyclase peniA that generates the angular triquinane scaffold silphinene via cyclization of the linear farnesyl pyrophosphate (FPP). The cytochrome P450 monooxygenase peniB and the flavin-dependent monooxygenase peniC then catalyze a series of oxidation reactions to transform silphinene into penifulvin A. The dioxygenases peniD and peniF, as well as the acetyltransferase peniE, do not seem to be involved in the biosynthesis of penifulvin A. The sequence is that of Acetyltransferase peniE from Penicillium patulum (Penicillium griseofulvum).